Reading from the N-terminus, the 155-residue chain is Ribosomal RNA large subunit methyltransferase H (155 aa).

S-adenosyl-L-methionine is bound by residues leucine 72, glycine 103, and 122-127; that span reads LSDLTL.

The protein belongs to the RNA methyltransferase RlmH family. Homodimer.

Its subcellular location is the cytoplasm. It catalyses the reaction pseudouridine(1915) in 23S rRNA + S-adenosyl-L-methionine = N(3)-methylpseudouridine(1915) in 23S rRNA + S-adenosyl-L-homocysteine + H(+). Specifically methylates the pseudouridine at position 1915 (m3Psi1915) in 23S rRNA. The sequence is that of Ribosomal RNA large subunit methyltransferase H from Acidovorax ebreus (strain TPSY) (Diaphorobacter sp. (strain TPSY)).